A 230-amino-acid chain; its full sequence is Movement and silencing protein TGBp1 (230 aa).

In terms of domain architecture, (+)RNA virus helicase ATP-binding spans Met1–Lys114. The region spanning Ser115–His230 is the (+)RNA virus helicase C-terminal domain.

This sequence belongs to the Tymovirales TGBp1 protein family. Homodimer and homooligomer. Interacts with capsid protein. Interacts with host AGO1; this interaction targets the host protein for degradation, thereby suppressing the antiviral RNA silencing.

Its subcellular location is the host cytoplasm. Functionally, transports viral genome to neighboring plant cells directly through plasmosdesmata, without any budding. The movement protein allows efficient cell to cell propagation, by bypassing the host cell wall barrier. Increases plasmodesma size exclusion limit. Acts as a suppressor of RNA-mediated gene silencing, also known as post-transcriptional gene silencing (PTGS), a mechanism of plant viral defense that limits the accumulation of viral RNAs. In Plantago asiatica (P1AMV), this protein is Movement and silencing protein TGBp1.